A 130-amino-acid chain; its full sequence is Small ribosomal subunit protein uS11c (130 aa).

The protein belongs to the universal ribosomal protein uS11 family. As to quaternary structure, part of the 30S ribosomal subunit.

Its subcellular location is the plastid. The protein resides in the chloroplast. The chain is Small ribosomal subunit protein uS11c from Marchantia polymorpha (Common liverwort).